Here is a 171-residue protein sequence, read N- to C-terminus: LIM domain transcription factor LMO4-B (171 aa).

Residues methionine 1–serine 19 show a composition bias toward polar residues. Positions methionine 1–proline 20 are disordered. LIM zinc-binding domains follow at residues lysine 22–asparagine 84 and glycine 86–asparagine 148.

Its function is as follows. Acts as a positive cofactor of GATA transcription factors to establish the identity of the ventral mesoderm during gastrulation. Down-regulation in the dorsal mesoderm is necessary for the proper formation of this territory since, when present, lmo4 may bind ldb1 and restrict the availability of this cofactor for Spemman organizer transcription factors. At neurula stages, suppresses primary neuron differentiation and modulates gene expression at the Isthmic Organizer of the midbrain-hindbrain boundary. In Xenopus laevis (African clawed frog), this protein is LIM domain transcription factor LMO4-B (lmo4-b).